We begin with the raw amino-acid sequence, 203 residues long: uncharacterized protein (203 aa).

A helical transmembrane segment spans residues 89–109 (CEIPFAACSVLSWSLPTIAAL).

The protein localises to the membrane. This is an uncharacterized protein from Saccharomyces cerevisiae (strain ATCC 204508 / S288c) (Baker's yeast).